The chain runs to 102 residues: Chorion protein S15 (102 aa).

A signal peptide spans 1 to 18; it reads MKFLIAFVAIAFFACVSA.

It belongs to the chorion protein S15/S18 family.

The protein resides in the secreted. In terms of biological role, chorion membrane (egg shell) protein; plays a role in protecting the egg from the environment. The polypeptide is Chorion protein S15 (Cp15) (Drosophila grimshawi (Hawaiian fruit fly)).